The chain runs to 605 residues: Aspartate--tRNA(Asp/Asn) ligase (605 aa).

Glu-183 lines the L-aspartate pocket. The segment at 207–210 (QLYK) is aspartate. Arg-229 provides a ligand contact to L-aspartate. Residues 229 to 231 (RDE) and Gln-238 contribute to the ATP site. Residue His-456 participates in L-aspartate binding. Glu-490 is an ATP binding site. Arg-497 contacts L-aspartate. 542-545 (GLDR) is a binding site for ATP.

This sequence belongs to the class-II aminoacyl-tRNA synthetase family. Type 1 subfamily. In terms of assembly, homodimer.

The protein localises to the cytoplasm. It catalyses the reaction tRNA(Asx) + L-aspartate + ATP = L-aspartyl-tRNA(Asx) + AMP + diphosphate. Its function is as follows. Aspartyl-tRNA synthetase with relaxed tRNA specificity since it is able to aspartylate not only its cognate tRNA(Asp) but also tRNA(Asn). Reaction proceeds in two steps: L-aspartate is first activated by ATP to form Asp-AMP and then transferred to the acceptor end of tRNA(Asp/Asn). This Heliobacterium modesticaldum (strain ATCC 51547 / Ice1) protein is Aspartate--tRNA(Asp/Asn) ligase.